Reading from the N-terminus, the 238-residue chain is uncharacterized protein (238 aa).

A run of 3 helical transmembrane segments spans residues 75-95 (YAIF…HNFY), 116-136 (IVLI…FSLI), and 172-192 (IQGL…LEVI). Positions 200-238 (DVEMSSMRGQAITTEPASDNTMAEETDCNTSKDVESGSN) are disordered. Residues 206 to 220 (MRGQAITTEPASDNT) show a composition bias toward polar residues. Over residues 229 to 238 (TSKDVESGSN) the composition is skewed to basic and acidic residues.

The protein resides in the membrane. This is an uncharacterized protein from Schizosaccharomyces pombe (strain 972 / ATCC 24843) (Fission yeast).